Here is a 155-residue protein sequence, read N- to C-terminus: 6,7-dimethyl-8-ribityllumazine synthase (155 aa).

5-amino-6-(D-ribitylamino)uracil contacts are provided by residues W24, 58–60, and 82–84; these read AFE and AVI. 87-88 lines the (2S)-2-hydroxy-3-oxobutyl phosphate pocket; that stretch reads GT. The active-site Proton donor is the H90. F115 lines the 5-amino-6-(D-ribitylamino)uracil pocket. R129 serves as a coordination point for (2S)-2-hydroxy-3-oxobutyl phosphate.

It belongs to the DMRL synthase family. As to quaternary structure, forms an icosahedral capsid composed of 60 subunits, arranged as a dodecamer of pentamers.

The enzyme catalyses (2S)-2-hydroxy-3-oxobutyl phosphate + 5-amino-6-(D-ribitylamino)uracil = 6,7-dimethyl-8-(1-D-ribityl)lumazine + phosphate + 2 H2O + H(+). Its pathway is cofactor biosynthesis; riboflavin biosynthesis; riboflavin from 2-hydroxy-3-oxobutyl phosphate and 5-amino-6-(D-ribitylamino)uracil: step 1/2. In terms of biological role, catalyzes the formation of 6,7-dimethyl-8-ribityllumazine by condensation of 5-amino-6-(D-ribitylamino)uracil with 3,4-dihydroxy-2-butanone 4-phosphate. This is the penultimate step in the biosynthesis of riboflavin. This is 6,7-dimethyl-8-ribityllumazine synthase from Teredinibacter turnerae (strain ATCC 39867 / T7901).